A 311-amino-acid chain; its full sequence is Mediator of RNA polymerase II transcription subunit 27-B (311 aa).

It belongs to the Mediator complex subunit 27 family. In terms of assembly, component of the Mediator complex.

The protein resides in the nucleus. Its function is as follows. Component of the Mediator complex, a coactivator involved in the regulated transcription of nearly all RNA polymerase II-dependent genes. Mediator functions as a bridge to convey information from gene-specific regulatory proteins to the basal RNA polymerase II transcription machinery. Mediator is recruited to promoters by direct interactions with regulatory proteins and serves as a scaffold for the assembly of a functional preinitiation complex with RNA polymerase II and the general transcription factors. The chain is Mediator of RNA polymerase II transcription subunit 27-B (med27-b) from Xenopus laevis (African clawed frog).